The chain runs to 251 residues: tRNA (guanine-N(1)-)-methyltransferase (251 aa).

Residues Gly-111 and Leu-131–Leu-136 each bind S-adenosyl-L-methionine.

This sequence belongs to the RNA methyltransferase TrmD family. Homodimer.

Its subcellular location is the cytoplasm. The enzyme catalyses guanosine(37) in tRNA + S-adenosyl-L-methionine = N(1)-methylguanosine(37) in tRNA + S-adenosyl-L-homocysteine + H(+). Specifically methylates guanosine-37 in various tRNAs. The sequence is that of tRNA (guanine-N(1)-)-methyltransferase from Synechococcus sp. (strain JA-2-3B'a(2-13)) (Cyanobacteria bacterium Yellowstone B-Prime).